The primary structure comprises 162 residues: Phospholipase A and acyltransferase 3 (162 aa).

The Cytoplasmic segment spans residues 1–133 (MRAPIPEPKP…VARSDQVRDV (133 aa)). Residues 13–129 (LIEIFRPFYR…LRYGVARSDQ (117 aa)) form the LRAT domain. Residues His23 and His35 contribute to the active site. The active-site Acyl-thioester intermediate is the Cys113. A helical transmembrane segment spans residues 134 to 154 (IIAASVAGMGLAAMSLIGVMF). At 155–162 (SRNKRQKQ) the chain is on the lumenal side.

This sequence belongs to the H-rev107 family. In terms of assembly, interacts with PPP2R1A; this interaction might decrease PP2A activity. In terms of tissue distribution, widely expressed. Low expression, if any, in hematopoietic cells and thymus. In testis, confined to round spermatids. Expressed in normal ovarian epithelial cells. Down-regulated in some ovarian carcinomas and testicular germ cell tumors. Highly expressed in white adipose tissue.

The protein resides in the cell membrane. It localises to the cytoplasm. It is found in the cytosol. Its subcellular location is the perinuclear region. The protein localises to the peroxisome membrane. The protein resides in the mitochondrion membrane. It localises to the nucleus envelope. It is found in the lysosome membrane. Its subcellular location is the endoplasmic reticulum membrane. The enzyme catalyses a 1,2-diacyl-sn-glycero-3-phosphocholine + H2O = a 1-acyl-sn-glycero-3-phosphocholine + a fatty acid + H(+). It carries out the reaction a 1,2-diacyl-sn-glycero-3-phosphocholine + H2O = a 2-acyl-sn-glycero-3-phosphocholine + a fatty acid + H(+). The catalysed reaction is 1,2-dihexadecanoyl-sn-glycero-3-phosphocholine + H2O = 1-hexadecanoyl-sn-glycero-3-phosphocholine + hexadecanoate + H(+). It catalyses the reaction 1,2-dihexadecanoyl-sn-glycero-3-phosphocholine + H2O = 2-hexadecanoyl-sn-glycero-3-phosphocholine + hexadecanoate + H(+). The enzyme catalyses 1-hexadecanoyl-2-(9Z-octadecenoyl)-sn-glycero-3-phosphocholine + H2O = 2-(9Z-octadecenoyl)-sn-glycero-3-phosphocholine + hexadecanoate + H(+). It carries out the reaction 1-hexadecanoyl-2-(9Z-octadecenoyl)-sn-glycero-3-phosphocholine + H2O = 1-hexadecanoyl-sn-glycero-3-phosphocholine + (9Z)-octadecenoate + H(+). The catalysed reaction is 1-hexadecanoyl-2-(5Z,8Z,11Z,14Z-eicosatetraenoyl)-sn-glycero-3-phosphocholine + H2O = 1-hexadecanoyl-sn-glycero-3-phosphocholine + (5Z,8Z,11Z,14Z)-eicosatetraenoate + H(+). It catalyses the reaction 1-hexadecanoyl-2-(5Z,8Z,11Z,14Z-eicosatetraenoyl)-sn-glycero-3-phosphocholine + H2O = 2-(5Z,8Z,11Z,14Z)-eicosatetraenoyl-sn-glycero-3-phosphocholine + hexadecanoate + H(+). The enzyme catalyses 1-hexadecanoyl-2-(9Z,12Z-octadecadienoyl)-sn-glycero-3-phosphoethanolamine + H2O = 1-hexadecanoyl-sn-glycero-3-phosphoethanolamine + (9Z,12Z)-octadecadienoate + H(+). It carries out the reaction 1-hexadecanoyl-2-(9Z,12Z-octadecadienoyl)-sn-glycero-3-phosphoethanolamine + H2O = 2-(9Z,12Z)-octadecadienoyl-sn-glycero-3-phosphoethanolamine + hexadecanoate + H(+). The catalysed reaction is 1-hexadecanoyl-2-(5Z,8Z,11Z,14Z-eicosatetraenoyl)-sn-glycero-3-phosphoethanolamine + H2O = 1-hexadecanoyl-sn-glycero-3-phosphoethanolamine + (5Z,8Z,11Z,14Z)-eicosatetraenoate + H(+). It catalyses the reaction 1-hexadecanoyl-2-(5Z,8Z,11Z,14Z-eicosatetraenoyl)-sn-glycero-3-phosphoethanolamine + H2O = 2-(5Z,8Z,11Z,14Z)-eicosatetraenoyl-sn-glycero-3-phosphoethanolamine + hexadecanoate + H(+). The enzyme catalyses 1-hexanoyl-2-acyl-sn-glycero-3-phosphocholine + H2O = hexanoate + a 2-acyl-sn-glycero-3-phosphocholine + H(+). It carries out the reaction 1-hexanoyl-2-acyl-sn-glycero-3-phosphocholine + H2O = 1-hexanoyl-sn-glycero-3-phosphocholine + a fatty acid + H(+). The catalysed reaction is 1,2-diheptadecanoyl-sn-glycero-3-phosphoethanolamine + 1-(9Z-octadecenoyl)-2-hexadecanoyl-sn-glycero-3-phosphocholine = 1,2-diheptadecanoyl-sn-glycero-3-phospho-N-hexadecanoyl-ethanolamine + 1-(9Z-octadecenoyl)-sn-glycero-3-phosphocholine + H(+). It catalyses the reaction 1,2-diheptadecanoyl-sn-glycero-3-phosphoethanolamine + 1-(9Z-octadecenoyl)-2-hexadecanoyl-sn-glycero-3-phosphocholine = 1,2-diheptadecanoyl-sn-glycero-3-phospho-N-(9Z-octadecenoyl)-ethanolamine + 2-hexadecanoyl-sn-glycero-3-phosphocholine + H(+). The enzyme catalyses 1,2-dihexanoyl-sn-glycero-3-phosphoethanolamine + 2-heptanoyl-sn-glycero-3-phosphocholine = hexanoyl-sn-glycero-3-phosphoethanolamine + 1-hexanoyl-2-heptanoyl-sn-glycero-3-phosphocholine. It carries out the reaction 1-hexadecanoyl-2-octadecanoyl-sn-glycero-3-phosphocholine + H2O = octadecanoate + 1-hexadecanoyl-sn-glycero-3-phosphocholine + H(+). The catalysed reaction is 1-hexadecanoyl-2-octadecanoyl-sn-glycero-3-phosphocholine + H2O = 2-octadecanoyl-sn-glycero-3-phosphocholine + hexadecanoate + H(+). It catalyses the reaction 1-octadecanoyl-2-hexadecanoyl-sn-glycero-3-phosphocholine + H2O = 1-octadecanoyl-sn-glycero-3-phosphocholine + hexadecanoate + H(+). The enzyme catalyses 1-octadecanoyl-2-hexadecanoyl-sn-glycero-3-phosphocholine + H2O = 2-hexadecanoyl-sn-glycero-3-phosphocholine + octadecanoate + H(+). It carries out the reaction 1-hexadecanoyl-2-(9Z,12Z-octadecadienoyl)-sn-glycero-3-phosphocholine + H2O = (9Z,12Z)-octadecadienoate + 1-hexadecanoyl-sn-glycero-3-phosphocholine + H(+). The catalysed reaction is 1-hexadecanoyl-2-(9Z,12Z-octadecadienoyl)-sn-glycero-3-phosphocholine + H2O = 2-(9Z,12Z-octadecadienoyl)-sn-glycero-3-phosphocholine + hexadecanoate + H(+). It catalyses the reaction 1,2-di-(9Z-octadecenoyl)-sn-glycero-3-phosphocholine + H2O = 2-(9Z-octadecenoyl)-sn-glycero-3-phosphocholine + (9Z)-octadecenoate + H(+). The enzyme catalyses 1,2-dihexadecanoyl-sn-glycero-3-phosphocholine + H2O = hexadecanoyl-sn-glycero-3-phosphocholine + hexadecanoate + H(+). It carries out the reaction 1,2-di-(9Z-octadecenoyl)-sn-glycero-3-phosphocholine + H2O = 1-(9Z-octadecenoyl)-sn-glycero-3-phosphocholine + (9Z)-octadecenoate + H(+). The catalysed reaction is 1,2-di-(9Z-octadecenoyl)-sn-glycero-3-phosphoethanolamine + 1,2-dihexadecanoyl-sn-glycero-3-phosphocholine = hexadecanoyl-sn-glycero-3-phosphocholine + N-hexadecanoyl-1,2-di-(9Z-octadecenoyl)-sn-glycero-3-phosphoethanolamine + H(+). It catalyses the reaction 1,2-di-(9Z,12Z-octadecadienoyl)-sn-glycero-3-phosphocholine + H2O = 1-(9Z,12Z)-octadecadienoyl-sn-glycero-3-phosphocholine + (9Z,12Z)-octadecadienoate + H(+). Exhibits both phospholipase A1/2 and acyltransferase activities. Shows phospholipase A1 (PLA1) and A2 (PLA2) activity, catalyzing the calcium-independent release of fatty acids from the sn-1 or sn-2 position of glycerophospholipids. For most substrates, PLA1 activity is much higher than PLA2 activity. Shows O-acyltransferase activity,catalyzing the transfer of a fatty acyl group from glycerophospholipid to the hydroxyl group of lysophospholipid. Shows N-acyltransferase activity, catalyzing the calcium-independent transfer of a fatty acyl group at the sn-1 position of phosphatidylcholine (PC) and other glycerophospholipids to the primary amine of phosphatidylethanolamine (PE), forming N-acylphosphatidylethanolamine (NAPE), which serves as precursor for N-acylethanolamines (NAEs). Exhibits high N-acyltransferase activity and low phospholipase A1/2 activity. Required for complete organelle rupture and degradation that occur during eye lens terminal differentiation, when fiber cells that compose the lens degrade all membrane-bound organelles in order to provide lens with transparency to allow the passage of light. Organelle membrane degradation is probably catalyzed by the phospholipase activity. Functionally, (Microbial infection) Acts as a host factor for picornaviruses: required during early infection to promote viral genome release into the cytoplasm. May act as a cellular sensor of membrane damage at sites of virus entry, which relocalizes to sites of membrane rupture upon virus unfection. Facilitates safe passage of the RNA away from LGALS8, enabling viral genome translation by host ribosome. May also be involved in initiating pore formation, increasing pore size or in maintaining pores for genome delivery. The lipid-modifying enzyme activity is required for this process. The sequence is that of Phospholipase A and acyltransferase 3 from Homo sapiens (Human).